Here is a 298-residue protein sequence, read N- to C-terminus: GTPase Era (298 aa).

An Era-type G domain is found at 8-176 (RCGRIAVIGR…VSDLLALLPE (169 aa)). The G1 stretch occupies residues 16-23 (GRPNVGKS). Position 16-23 (16-23 (GRPNVGKS)) interacts with GTP. Residues 42-46 (QTTRH) form a G2 region. The tract at residues 63–66 (DTPG) is G3. Residues 63–67 (DTPGL) and 125–128 (NKID) each bind GTP. The G4 stretch occupies residues 125 to 128 (NKID). A G5 region spans residues 155–157 (VSA). A KH type-2 domain is found at 199-283 (VREQVMRQLG…FLETWVRVRK (85 aa)).

This sequence belongs to the TRAFAC class TrmE-Era-EngA-EngB-Septin-like GTPase superfamily. Era GTPase family. In terms of assembly, monomer.

It localises to the cytoplasm. The protein resides in the cell inner membrane. In terms of biological role, an essential GTPase that binds both GDP and GTP, with rapid nucleotide exchange. Plays a role in 16S rRNA processing and 30S ribosomal subunit biogenesis and possibly also in cell cycle regulation and energy metabolism. The polypeptide is GTPase Era (Xylella fastidiosa (strain M12)).